The following is a 666-amino-acid chain: E3 ubiquitin-protein ligase MBR2 (666 aa).

Composition is skewed to polar residues over residues 1 to 14 (MQGPRSTGDSSTGI), 23 to 35 (CSTNSETTSNNIL), 42 to 58 (FPNNTTGSGRPTYASSS), and 73 to 88 (SSSRLGPSDHLNSNGS). 6 disordered regions span residues 1-58 (MQGP…ASSS), 73-95 (SSSRLGPSDHLNSNGSKTDRQLL), 155-179 (SLGSSSQTAEERSSGPGSSLGGLGS), 221-329 (SSLS…DGQP), 400-433 (NPSTSGDSPFVPRAGSSSGIHGLQPNPTWVTPHN), and 457-491 (GASLPLLPTGPSVSSNEAAAPSGSSSRSHRSRQRR). Residues 221 to 239 (SSLSLSMPSQNSPNVNNQS) are compositionally biased toward low complexity. Composition is skewed to polar residues over residues 258-268 (AFPSTRSTETI), 286-303 (FSFTQSGSSVRQQQQLPA), and 414-433 (GSSSGIHGLQPNPTWVTPHN). An RING-type; atypical zinc finger spans residues 619 to 660 (CCVCQEEYAEGDDLGTLGCGHEFHTACVKQWLMLKNLCPICK).

This sequence belongs to the RING-type zinc finger family. As to quaternary structure, interacts with MED25 and UBC11.

It catalyses the reaction S-ubiquitinyl-[E2 ubiquitin-conjugating enzyme]-L-cysteine + [acceptor protein]-L-lysine = [E2 ubiquitin-conjugating enzyme]-L-cysteine + N(6)-ubiquitinyl-[acceptor protein]-L-lysine.. It participates in protein modification; protein ubiquitination. E3 ubiquitin-protein ligase that functions as a regulator of MED25 stability by targeting MED25 for degradation in a RING-H2-dependent way. Proteasome-dependent degradation of MED25 seems to activate its function as positive regulator of FLOWERING LOCUS T (FT) and is important to induce the expression of FT and consequently to promote flowering. May function downstream of HAL3 and be required for HAL3-regulated plant growth. Activation of MBR2 by HAL3 may lead to the degradation of cell cycle suppressors, resulting in enhancement of cell division and plant growth. In Arabidopsis thaliana (Mouse-ear cress), this protein is E3 ubiquitin-protein ligase MBR2 (MBR2).